A 238-amino-acid chain; its full sequence is Lipid transferase CIDEC (238 aa).

The segment at 1 to 35 (MEYAMKSLSLLYPKSLSRHVSVRTSVVTQQLLSEP) is required for liquid-liquid phase separation (LLPS). Positions 41-118 (RARPCRVSTA…VLQKGQKWQP (78 aa)) constitute a CIDE-N domain.

This sequence belongs to the CIDE family. In terms of assembly, homodimer. Homooligomer; undergoes liquid-liquid phase separation (LLPS) via its N-terminus, facilitating lipid droplet fusion, occurs at the lipid droplet contact sites. Interacts with CIDEA. Interacts with PLIN1. Interacts with NFAT5; this interaction is direct and retains NFAT5 in the cytoplasm. Interacts with CEBPB. Interacts with isoform CLSTN3beta of CLSTN3; inhibiting the lipid transferase activity of CIDEC. Post-translationally, ubiquitinated and targeted to proteasomal degradation, resulting in a short half-life (about 15 minutes in 3T3-L1 cells). Protein stability depends on triaclyglycerol synthesis, fatty acid availability and lipid droplet formation. Expressed mainly in adipose tissue, small intestine, heart, colon and stomach and, at lower levels, in brain, kidney and liver.

It localises to the lipid droplet. Its subcellular location is the endoplasmic reticulum. It is found in the nucleus. The catalysed reaction is a triacyl-sn-glycerol(in) = a triacyl-sn-glycerol(out). Lipid transferase specifically expressed in white adipose tissue, which promotes unilocular lipid droplet formation by mediating lipid droplet fusion. Lipid droplet fusion promotes their enlargement, restricting lipolysis and favoring lipid storage. Localizes on the lipid droplet surface, at focal contact sites between lipid droplets, and mediates atypical lipid droplet fusion by undergoing liquid-liquid phase separation (LLPS) and promoting directional net neutral lipid transfer from the smaller to larger lipid droplets. The transfer direction may be driven by the internal pressure difference between the contacting lipid droplet pair. Its role in neutral lipid transfer and lipid droplet enlargement is activated by the interaction with PLIN1. May also act as a CEBPB coactivator in the white adipose tissue to control the expression of a subset of CEBPB downstream target genes, including SOCS1, SOCS3, TGFB1, TGFBR1, ID2 and XDH. When overexpressed in preadipocytes, induces apoptosis or increases cell susceptibility to apoptosis induced by serum deprivation or TGFB treatment. This is Lipid transferase CIDEC from Homo sapiens (Human).